The chain runs to 1376 residues: Ubiquitin carboxyl-terminal hydrolase 47 (1376 aa).

An N6-acetyllysine modification is found at Lys122. A USP domain is found at 188-564 (VGLVNQAMTC…NAYMLIYRLK (377 aa)). The active-site Nucleophile is the Cys197. Residues 426-452 (EKSPQTESCTDSGAENEGSCHSDQMSN) form a disordered region. Residues 430–452 (QTESCTDSGAENEGSCHSDQMSN) are compositionally biased toward polar residues. His503 functions as the Proton acceptor in the catalytic mechanism. The residue at position 832 (Ser832) is a Phosphoserine. 3 disordered regions span residues 835-863 (SYSK…KGPA), 880-971 (LKSL…SSDT), and 985-1025 (GLDS…ESGK). Over residues 882–900 (SLSLQQQQQDGDNGDSSKS) the composition is skewed to low complexity. Phosphoserine is present on residues Ser911 and Ser934. Residues 930–939 (HIQTSDPENF) are compositionally biased toward polar residues. The span at 941–951 (SEERSDSDVNN) shows a compositional bias: basic and acidic residues. Residues 954-970 (STSSVDSDILSSSHSSD) are compositionally biased toward low complexity. The span at 998–1007 (KANEGKKETW) shows a compositional bias: basic and acidic residues. Positions 1008–1021 (DTAEEDSGTDSEYD) are enriched in acidic residues. Ser1014 carries the phosphoserine modification. A Phosphothreonine modification is found at Thr1016. Ser1018 carries the phosphoserine modification.

The protein belongs to the peptidase C19 family. USP47 subfamily. In terms of assembly, interacts with BTRC and FBXW11. Interacts with POLB.

The protein resides in the cytoplasm. It carries out the reaction Thiol-dependent hydrolysis of ester, thioester, amide, peptide and isopeptide bonds formed by the C-terminal Gly of ubiquitin (a 76-residue protein attached to proteins as an intracellular targeting signal).. Its function is as follows. Ubiquitin-specific protease that specifically deubiquitinates monoubiquitinated DNA polymerase beta (POLB), stabilizing POLB thereby playing a role in base-excision repair (BER). Acts as a regulator of cell growth and genome integrity. May also indirectly regulate CDC25A expression at a transcriptional level. This chain is Ubiquitin carboxyl-terminal hydrolase 47 (Usp47), found in Mus musculus (Mouse).